Here is a 546-residue protein sequence, read N- to C-terminus: Peroxisomal OPC-8:0-CoA ligase 1 (546 aa).

Residues S197, S198, G199, T200, T201, and K205 each contribute to the ATP site. A CoA-binding site is contributed by K265. The tract at residues 267 to 338 (EMHEMMSAIG…EKYPTVKILQ (72 aa)) is SBD1. 5 residues coordinate ATP: Q338, G339, T343, D424, and R439. The interval 339–403 (GYGLTESTGI…LKGPSIMKGY (65 aa)) is SBD2. 2 residues coordinate CoA: K447 and G448. K530 serves as a coordination point for ATP. The Microbody targeting signal motif lies at 544–546 (SKL).

This sequence belongs to the ATP-dependent AMP-binding enzyme family. Mg(2+) serves as cofactor. As to expression, expressed at low levels in seedlings, cotyledons, leaves, hypocotyls and roots.

The protein localises to the peroxisome. The catalysed reaction is (9S,13S,15Z)-12-oxophyto-10,15-dienoate + ATP + CoA = (10Z,15Z)-12-oxophytodienoyl-CoA + AMP + diphosphate. The enzyme catalyses (1S,2S)-OPC-8 + ATP + CoA = OPC8-CoA + AMP + diphosphate. It carries out the reaction hexadecanoate + ATP + CoA = hexadecanoyl-CoA + AMP + diphosphate. It catalyses the reaction (9Z)-octadecenoate + ATP + CoA = (9Z)-octadecenoyl-CoA + AMP + diphosphate. The catalysed reaction is tetradecanoate + ATP + CoA = tetradecanoyl-CoA + AMP + diphosphate. The enzyme catalyses decanoate + ATP + CoA = decanoyl-CoA + AMP + diphosphate. It carries out the reaction dodecanoate + ATP + CoA = dodecanoyl-CoA + AMP + diphosphate. It catalyses the reaction octadecanoate + ATP + CoA = octadecanoyl-CoA + AMP + diphosphate. The catalysed reaction is OPC-6 + ATP + CoA = OPC-6-CoA + AMP + diphosphate. The enzyme catalyses dinor-OPDA + ATP + CoA = dinor-OPDA-CoA + AMP + diphosphate. In terms of biological role, contributes to jasmonic acid biosynthesis by initiating the beta-oxidative chain shortening of its precursors. Converts 12-oxo-phytodienoic acid (OPDA) and 3-oxo-2-(2'-pentenyl)-cyclopentane-1-octanoic acid (OPC-8:0) into OPDA-CoA and OPC-8:0-CoA, respectively. Follows a two-step reaction mechanism, wherein the carboxylate substrate first undergoes adenylation by ATP, followed by a thioesterification in the presence of CoA to yield the final CoA thioester. This is Peroxisomal OPC-8:0-CoA ligase 1 from Arabidopsis thaliana (Mouse-ear cress).